The following is a 196-amino-acid chain: Chloroplastic ATP-dependent Clp protease proteolytic subunit 1 (196 aa).

Ser-101 serves as the catalytic Nucleophile. His-126 is an active-site residue.

It belongs to the peptidase S14 family. As to quaternary structure, component of the chloroplastic Clp protease core complex which consist of at least 16 proteins: CLPP4 (3 copies), CLPP5 (3 copies), CLPR4 (2 copies), ClpP1 (1 copy), CLPP6 (1 copy), CLPR2 (1 copy), CLPT1 (1 copy), CLPT2 (1 copy) and 3 copies of CLPP3 and/or CLPR1 and/or CLPR3. The core complex is organized in two heptameric rings, one containing CLPP3,4,5,6 in a 1:2:3:1 ratio and the other CLPP1 and CLPR1,2,3,4 in a 3:1:1:1:1 ratio. In terms of tissue distribution, mostly expressed in leaves. Also detected in stems, and to a lower extent, in roots (at protein level).

It localises to the plastid. The protein localises to the chloroplast stroma. It carries out the reaction Hydrolysis of proteins to small peptides in the presence of ATP and magnesium. alpha-casein is the usual test substrate. In the absence of ATP, only oligopeptides shorter than five residues are hydrolyzed (such as succinyl-Leu-Tyr-|-NHMec, and Leu-Tyr-Leu-|-Tyr-Trp, in which cleavage of the -Tyr-|-Leu- and -Tyr-|-Trp bonds also occurs).. Functionally, cleaves peptides in various proteins in a process that requires ATP hydrolysis. Has a chymotrypsin-like activity. Plays a major role in the degradation of misfolded proteins. This Arabidopsis thaliana (Mouse-ear cress) protein is Chloroplastic ATP-dependent Clp protease proteolytic subunit 1.